Reading from the N-terminus, the 492-residue chain is Prostaglandin E2 receptor EP4 subtype (492 aa).

Over 1–19 the chain is Extracellular; that stretch reads MSIPGTNASSSQASNPLNS. Residue N7 is glycosylated (N-linked (GlcNAc...) asparagine). A helical transmembrane segment spans residues 20 to 43; that stretch reads PVTIPAVMFIFGVVGNLVAIVVLC. Over 44 to 55 the chain is Cytoplasmic; the sequence is KSRKEQKETTFY. A helical transmembrane segment spans residues 56–79; that stretch reads TLVCGLAVTDLLGTLLVSPVTIAT. Residues 80–96 lie on the Extracellular side of the membrane; it reads YLKGQWPGGHALCEYST. The cysteines at positions 92 and 170 are disulfide-linked. Residues 97–115 form a helical membrane-spanning segment; that stretch reads FILLFFGLSGLSIICAMSI. Over 116–135 the chain is Cytoplasmic; it reads ERYLAINHAYFYSHYVDKRL. The helical transmembrane segment at 136 to 160 threads the bilayer; sequence AGLTLFAVYASNVLFCALPSMGLGS. The Extracellular portion of the chain corresponds to 161–184; that stretch reads SRLQYPATWCFIDWTTNVTAHAAF. Residues 185–211 traverse the membrane as a helical segment; the sequence is SYMYAGFSSFLILATVLCNVLVCGALL. The Cytoplasmic segment spans residues 212-273; it reads RMHRQFMRRT…RSFRRIAGAE (62 aa). A helical membrane pass occupies residues 274-301; that stretch reads IQMVILLIATSLVVLICSIPLVVRVFVN. Topologically, residues 302-318 are extracellular; that stretch reads QLYRPQLEPVIGKNPDL. Residues 319 to 338 traverse the membrane as a helical segment; the sequence is QAIRIASVSPILDPWIYILL. The Cytoplasmic segment spans residues 339–492; it reads RKTVLSKAIE…ETLNLSEKCI (154 aa). Positions 361 to 374 are enriched in basic and acidic residues; that stretch reads RRERSGPHCSDSRR. The segment at 361–383 is disordered; it reads RRERSGPHCSDSRRTSSAVSGHS. Phosphoserine occurs at positions 380, 383, 385, and 388.

Belongs to the G-protein coupled receptor 1 family. Interacts with FEM1A. Post-translationally, phosphorylation mediates agonist-mediated desensitization by promoting cytoplasmic retention.

The protein resides in the cell membrane. Its function is as follows. Receptor for prostaglandin E2 (PGE2). The activity of this receptor is mediated by G(s) proteins that stimulate adenylate cyclase. Has a relaxing effect on smooth muscle. May play an important role in regulating renal hemodynamics, intestinal epithelial transport, adrenal aldosterone secretion, and uterine function. This is Prostaglandin E2 receptor EP4 subtype (PTGER4) from Bos taurus (Bovine).